The following is a 238-amino-acid chain: Sugar fermentation stimulation protein homolog (238 aa).

It belongs to the SfsA family.

The sequence is that of Sugar fermentation stimulation protein homolog from Pseudoalteromonas translucida (strain TAC 125).